Consider the following 103-residue polypeptide: Large ribosomal subunit protein uL24 (103 aa).

It belongs to the universal ribosomal protein uL24 family. As to quaternary structure, part of the 50S ribosomal subunit.

One of two assembly initiator proteins, it binds directly to the 5'-end of the 23S rRNA, where it nucleates assembly of the 50S subunit. In terms of biological role, one of the proteins that surrounds the polypeptide exit tunnel on the outside of the subunit. This Ruegeria pomeroyi (strain ATCC 700808 / DSM 15171 / DSS-3) (Silicibacter pomeroyi) protein is Large ribosomal subunit protein uL24.